A 574-amino-acid polypeptide reads, in one-letter code: Arginine--tRNA ligase (574 aa).

Positions 126–136 match the 'HIGH' region motif; sequence PNIAKRMHVGH.

The protein belongs to the class-I aminoacyl-tRNA synthetase family. In terms of assembly, monomer.

Its subcellular location is the cytoplasm. The enzyme catalyses tRNA(Arg) + L-arginine + ATP = L-arginyl-tRNA(Arg) + AMP + diphosphate. The polypeptide is Arginine--tRNA ligase (Chloroflexus aggregans (strain MD-66 / DSM 9485)).